The sequence spans 237 residues: Orotate phosphoribosyltransferase (237 aa).

K29 contributes to the 5-phospho-alpha-D-ribose 1-diphosphate binding site. 37-38 (FF) provides a ligand contact to orotate. 5-phospho-alpha-D-ribose 1-diphosphate-binding positions include 79 to 80 (YK), R105, K106, K109, H111, and 130 to 138 (DDVMSAGTA). Residues S134 and R162 each contribute to the orotate site.

This sequence belongs to the purine/pyrimidine phosphoribosyltransferase family. PyrE subfamily. Homodimer. Mg(2+) is required as a cofactor.

The catalysed reaction is orotidine 5'-phosphate + diphosphate = orotate + 5-phospho-alpha-D-ribose 1-diphosphate. The protein operates within pyrimidine metabolism; UMP biosynthesis via de novo pathway; UMP from orotate: step 1/2. Its function is as follows. Catalyzes the transfer of a ribosyl phosphate group from 5-phosphoribose 1-diphosphate to orotate, leading to the formation of orotidine monophosphate (OMP). In Polaromonas naphthalenivorans (strain CJ2), this protein is Orotate phosphoribosyltransferase.